Consider the following 474-residue polypeptide: Glutamate--tRNA ligase (474 aa).

The short motif at 11–21 (PSPTGFLHIGG) is the 'HIGH' region element. Residues 240–244 (KLSKR) carry the 'KMSKS' region motif. Position 243 (Lys-243) interacts with ATP.

The protein belongs to the class-I aminoacyl-tRNA synthetase family. Glutamate--tRNA ligase type 1 subfamily. In terms of assembly, monomer.

The protein localises to the cytoplasm. The catalysed reaction is tRNA(Glu) + L-glutamate + ATP = L-glutamyl-tRNA(Glu) + AMP + diphosphate. Functionally, catalyzes the attachment of glutamate to tRNA(Glu) in a two-step reaction: glutamate is first activated by ATP to form Glu-AMP and then transferred to the acceptor end of tRNA(Glu). The sequence is that of Glutamate--tRNA ligase from Nitrobacter hamburgensis (strain DSM 10229 / NCIMB 13809 / X14).